The sequence spans 125 residues: Kappa-casein (125 aa).

The disordered stretch occupies residues 42–63 (LPNIDPPTVERRPRPRPSFIAI). Residue T97 is glycosylated (O-linked (GalNAc...) threonine). S104 is modified (phosphoserine; alternate). O-linked (GalNAc...) serine; alternate glycosylation is present at S104. T121 carries an O-linked (GalNAc...) threonine glycan. The residue at position 122 (S122) is a Phosphoserine.

Belongs to the kappa-casein family. Mammary gland specific. Secreted in milk.

It localises to the secreted. Functionally, kappa-casein stabilizes micelle formation, preventing casein precipitation in milk. The chain is Kappa-casein (CSN3) from Lama guanicoe (Guanaco).